Reading from the N-terminus, the 624-residue chain is MEIPGSLCKKVKLSNNAQNWGMQRATNVTYQAHHVSRNKRGQVVGTRGGFRGCTVWLTGLSGAGKTTVSMALEEYLVCHGIPCYTLDGDNIRQGLNKNLGFSPEDREENVRRIAEVAKLFADAGLVCITSFISPYTQDRNNARQIHEGASLPFFEVFVDAPLHVCEQRDVKGLYKKARAGEIKGFTGIDSEYEKPEAPELVLKTDSCDVNDCVQQVVELLQERDIVPVDASYEVKELYVPENKLHLAKTDAEALPALKINKVDMQWVQVLAEGWATPLNGFMREREYLQCLHFDCLLDGGVINLSVPIVLTATHEDKERLDGCTAFALVYEGRRVAILRNPEFFEHRKEERCARQWGTTCKNHPYIKMVLEQGDWLIGGDLQVLDRIYWNDGLDQYRLTPTELKQKFKDMNADAVFAFQLRNPVHNGHALLMQDTHKQLLERGYRRPVLLLHPLGGWTKDDDVPLMWRMKQHAAVLEEGILDPETTVVAIFPSPMMYAGPTEVQWHCRARMVAGANFYIVGRDPAGMPHPETGKDLYEPTHGAKVLTMAPGLITLEIVPFRVAAYNKKKKRMDYYDSEHHEDFEFISGTRMRKLAREGQKPPEGFMAPKAWTVLVEYYKSLEKA.

N-acetylmethionine is present on Met-1. The tract at residues 1-225 (MEIPGSLCKK…VVELLQERDI (225 aa)) is adenylyl-sulfate kinase. Lys-12 is subject to N6-acetyllysine. ATP is bound at residue 62–67 (GAGKTT). Residues 89–92 (DNIR), Phe-101, 106–109 (REEN), 132–133 (IS), Lys-171, and 184–185 (GF) contribute to the adenosine 5'-phosphosulfate site. ATP contacts are provided by residues Cys-207, Cys-212, 419–422 (QLRN), 521–525 (GRDPA), and Ala-563. The sulfate adenylyltransferase stretch occupies residues 234–624 (VKELYVPENK…VEYYKSLEKA (391 aa)).

The protein in the N-terminal section; belongs to the APS kinase family. In the C-terminal section; belongs to the sulfate adenylyltransferase family. Homodimer. As to expression, expressed in the neonatal brain and in cartilage.

The enzyme catalyses sulfate + ATP + H(+) = adenosine 5'-phosphosulfate + diphosphate. The catalysed reaction is adenosine 5'-phosphosulfate + ATP = 3'-phosphoadenylyl sulfate + ADP + H(+). It functions in the pathway sulfur metabolism; sulfate assimilation. Its function is as follows. Bifunctional enzyme with both ATP sulfurylase and APS kinase activity, which mediates two steps in the sulfate activation pathway. The first step is the transfer of a sulfate group to ATP to yield adenosine 5'-phosphosulfate (APS), and the second step is the transfer of a phosphate group from ATP to APS yielding 3'-phosphoadenylylsulfate (PAPS: activated sulfate donor used by sulfotransferase). In mammals, PAPS is the sole source of sulfate; APS appears to be only an intermediate in the sulfate-activation pathway. Required for normal biosynthesis of sulfated L-selectin ligands in endothelial cells. The sequence is that of Bifunctional 3'-phosphoadenosine 5'-phosphosulfate synthase 1 (Papss1) from Mus musculus (Mouse).